Reading from the N-terminus, the 179-residue chain is Large ribosomal subunit protein uL6 (179 aa).

The protein belongs to the universal ribosomal protein uL6 family. Part of the 50S ribosomal subunit.

Functionally, this protein binds to the 23S rRNA, and is important in its secondary structure. It is located near the subunit interface in the base of the L7/L12 stalk, and near the tRNA binding site of the peptidyltransferase center. This is Large ribosomal subunit protein uL6 from Bifidobacterium animalis subsp. lactis (strain AD011).